The chain runs to 306 residues: Tryptophan 2,3-dioxygenase (306 aa).

The segment at 1 to 33 (MQPPGDDAAPRCPFAGAHAPDAPHVPEAAGDDA) is disordered. Substrate is bound by residues 75-79 (FIIQH), Tyr-137, and Arg-141. His-264 serves as a coordination point for heme. Thr-278 provides a ligand contact to substrate.

The protein belongs to the tryptophan 2,3-dioxygenase family. As to quaternary structure, homotetramer. Requires heme as cofactor.

It catalyses the reaction L-tryptophan + O2 = N-formyl-L-kynurenine. Its pathway is amino-acid degradation; L-tryptophan degradation via kynurenine pathway; L-kynurenine from L-tryptophan: step 1/2. Its function is as follows. Heme-dependent dioxygenase that catalyzes the oxidative cleavage of the L-tryptophan (L-Trp) pyrrole ring and converts L-tryptophan to N-formyl-L-kynurenine. Catalyzes the oxidative cleavage of the indole moiety. The protein is Tryptophan 2,3-dioxygenase of Burkholderia pseudomallei (strain 668).